Reading from the N-terminus, the 181-residue chain is Inner membrane-spanning protein YciB (181 aa).

Helical transmembrane passes span 10–30 (LVIF…GALI), 50–70 (MHLI…ILHD), 72–92 (SFIK…LGVS), 118–138 (VTWY…YVAF), and 148–168 (FKVF…VVYL).

It belongs to the YciB family.

The protein resides in the cell inner membrane. Functionally, plays a role in cell envelope biogenesis, maintenance of cell envelope integrity and membrane homeostasis. The sequence is that of Inner membrane-spanning protein YciB from Shewanella pealeana (strain ATCC 700345 / ANG-SQ1).